The primary structure comprises 235 residues: MPKISKRLASLAGKIEDRAYAPLEAIALVKDNANAKFDETMEAHVRLGIDPKYTDQQLRTTVALPNGTGQSVRIAVVTRGEKVAEAKAAGAELAGEEDLVESISKGEMDFDLLIATPDMMPKVAKLGRVLGPRGLMPNPKAGTVTTDLEAAIKEFKAGKLEFRADRTGIVHVRFGKASFSADALLQNLKTLQETIDRNKPSGAKGRYWKSLYVTSTMGPSVEVDFSALQDIEQGS.

Belongs to the universal ribosomal protein uL1 family. As to quaternary structure, part of the 50S ribosomal subunit.

In terms of biological role, binds directly to 23S rRNA. The L1 stalk is quite mobile in the ribosome, and is involved in E site tRNA release. Its function is as follows. Protein L1 is also a translational repressor protein, it controls the translation of the L11 operon by binding to its mRNA. The protein is Large ribosomal subunit protein uL1 of Synechococcus sp. (strain CC9605).